A 116-amino-acid chain; its full sequence is Small ribosomal subunit protein uS13 (116 aa).

The segment at 88-116 is disordered; it reads GSRHKKGLPVRGQHTKNNARTRKGPRKQA.

The protein belongs to the universal ribosomal protein uS13 family. In terms of assembly, part of the 30S ribosomal subunit. Forms a loose heterodimer with protein S19. Forms two bridges to the 50S subunit in the 70S ribosome.

In terms of biological role, located at the top of the head of the 30S subunit, it contacts several helices of the 16S rRNA. In the 70S ribosome it contacts the 23S rRNA (bridge B1a) and protein L5 of the 50S subunit (bridge B1b), connecting the 2 subunits; these bridges are implicated in subunit movement. Contacts the tRNAs in the A and P-sites. In Finegoldia magna (strain ATCC 29328 / DSM 20472 / WAL 2508) (Peptostreptococcus magnus), this protein is Small ribosomal subunit protein uS13.